Consider the following 98-residue polypeptide: Citrate lyase acyl carrier protein (98 aa).

At S14 the chain carries O-(phosphoribosyl dephospho-coenzyme A)serine.

This sequence belongs to the CitD family. In terms of assembly, oligomer with a subunit composition of (alpha,beta,gamma)6.

It localises to the cytoplasm. In terms of biological role, covalent carrier of the coenzyme of citrate lyase. In Salmonella arizonae (strain ATCC BAA-731 / CDC346-86 / RSK2980), this protein is Citrate lyase acyl carrier protein.